We begin with the raw amino-acid sequence, 530 residues long: Pentatricopeptide repeat-containing protein At5g56310 (530 aa).

PPR repeat units lie at residues 77-114 (NTYL…CAKP), 115-149 (DTFT…GFDS), 150-180 (SVHV…MLVK), 181-211 (DVNV…MPCW), 214-248 (NEVS…NVEP), 249-283 (DEVT…GMNR), 284-314 (AVSL…VNER), 315-349 (NVVT…GVRP), 350-380 (NDVT…MRSK), and 386-420 (NIEH…ANAA). The tract at residues 421–496 (IWGSLLAASN…MAGESSIEVE (76 aa)) is type E motif. The interval 497–527 (NRVYKFISGDLTHPQVERIHEILQEMDLQIQ) is type E(+) motif.

Belongs to the PPR family. PCMP-E subfamily.

The chain is Pentatricopeptide repeat-containing protein At5g56310 (PCMP-E13) from Arabidopsis thaliana (Mouse-ear cress).